The chain runs to 511 residues: Aldehyde dehydrogenase X, mitochondrial (511 aa).

The N-terminal 11 residues, 1 to 11, are a transit peptide targeting the mitochondrion; sequence PRLFALHHSAT. Residue Lys45 is modified to N6-acetyllysine. Lys46 carries the post-translational modification N6-acetyllysine; alternate. At Lys46 the chain carries N6-succinyllysine; alternate. N6-succinyllysine is present on Lys75. 256 to 261 contacts NAD(+); the sequence is GSTKVG. Glu279 acts as the Proton acceptor in catalysis. Catalysis depends on Cys313, which acts as the Nucleophile. An N6-acetyllysine; alternate mark is found at Lys377, Lys393, and Lys420. An N6-succinyllysine; alternate mark is found at Lys377, Lys393, and Lys420. An N6-acetyllysine modification is found at Lys423.

It belongs to the aldehyde dehydrogenase family. In terms of assembly, homotetramer.

The protein resides in the mitochondrion matrix. It catalyses the reaction an aldehyde + NAD(+) + H2O = a carboxylate + NADH + 2 H(+). It functions in the pathway alcohol metabolism; ethanol degradation; acetate from ethanol: step 2/2. Functionally, ALDHs play a major role in the detoxification of alcohol-derived acetaldehyde. They are involved in the metabolism of corticosteroids, biogenic amines, neurotransmitters, and lipid peroxidation. In the cornea, this enzyme may help in the absorption of the damaging UV-B, as well as in the detoxification of the UV-induced peroxidic aldehydes. The polypeptide is Aldehyde dehydrogenase X, mitochondrial (ALDH1B1) (Bos taurus (Bovine)).